The primary structure comprises 112 residues: Ribonuclease P protein component (112 aa).

It belongs to the RnpA family. As to quaternary structure, consists of a catalytic RNA component (M1 or rnpB) and a protein subunit.

It carries out the reaction Endonucleolytic cleavage of RNA, removing 5'-extranucleotides from tRNA precursor.. RNaseP catalyzes the removal of the 5'-leader sequence from pre-tRNA to produce the mature 5'-terminus. It can also cleave other RNA substrates such as 4.5S RNA. The protein component plays an auxiliary but essential role in vivo by binding to the 5'-leader sequence and broadening the substrate specificity of the ribozyme. This chain is Ribonuclease P protein component, found in Mycoplasmopsis synoviae (strain 53) (Mycoplasma synoviae).